A 121-amino-acid polypeptide reads, in one-letter code: Pancreatic progenitor cell differentiation and proliferation factor (121 aa).

Disordered regions lie at residues 22-47 and 101-121; these read GSTSSNSSCGSSEYAGEVIPHPPGLQ and SRQLSESSDSGKVEQGSPPPS. Over residues 23 to 33 the composition is skewed to low complexity; sequence STSSNSSCGSS. Residues 101–110 show a composition bias toward polar residues; sequence SRQLSESSDS.

This sequence belongs to the PPDPF family.

In terms of biological role, probable regulator of exocrine pancreas development. This Salmo salar (Atlantic salmon) protein is Pancreatic progenitor cell differentiation and proliferation factor (ppdpf).